The following is a 201-amino-acid chain: Phosphoheptose isomerase 2 (201 aa).

One can recognise an SIS domain in the interval 39–198; sequence VIKAYKNGNK…EEELFGKGFS (160 aa). 54-56 contributes to the substrate binding site; sequence NGG. Zn(2+) contacts are provided by His63 and Glu67. Substrate-binding positions include Glu67, 96–97, 122–124, Ser127, and Gln174; these read ND and STS. Positions 174 and 182 each coordinate Zn(2+).

This sequence belongs to the SIS family. GmhA subfamily. In terms of assembly, homotetramer. Zn(2+) is required as a cofactor.

It is found in the cytoplasm. The enzyme catalyses 2 D-sedoheptulose 7-phosphate = D-glycero-alpha-D-manno-heptose 7-phosphate + D-glycero-beta-D-manno-heptose 7-phosphate. The protein operates within carbohydrate biosynthesis; D-glycero-D-manno-heptose 7-phosphate biosynthesis; D-glycero-alpha-D-manno-heptose 7-phosphate and D-glycero-beta-D-manno-heptose 7-phosphate from sedoheptulose 7-phosphate: step 1/1. Its pathway is capsule biogenesis; capsule polysaccharide biosynthesis. Its function is as follows. Catalyzes the isomerization of sedoheptulose 7-phosphate in D-glycero-D-manno-heptose 7-phosphate. No activity with L-galacto-heptulose, L-galacto-heptulose 7-phosphate or D-manno-heptulose. The polypeptide is Phosphoheptose isomerase 2 (Campylobacter jejuni subsp. jejuni serotype O:2 (strain ATCC 700819 / NCTC 11168)).